Reading from the N-terminus, the 482-residue chain is Histone deacetylase 1 (482 aa).

Positions 9–321 (RKVCYYYDGD…WTYETAVALD (313 aa)) are histone deacetylase. Glycine 27 and lysine 31 together coordinate 1D-myo-inositol 1,4,5,6-tetrakisphosphate. Lysine 74 carries the N6-acetyllysine; alternate modification. Residue lysine 74 forms a Glycyl lysine isopeptide (Lys-Gly) (interchain with G-Cter in SUMO2); alternate linkage. Histidine 141 is a catalytic residue. Positions 176 and 178 each coordinate Zn(2+). Position 220 is an N6-acetyllysine (lysine 220). S-nitrosocysteine is present on cysteine 261. Aspartate 264 contacts Zn(2+). A 1D-myo-inositol 1,4,5,6-tetrakisphosphate-binding site is contributed by arginine 270. Cysteine 273 carries the S-nitrosocysteine modification. Over residues 390 to 400 (PEESGDEDEDD) the composition is skewed to acidic residues. The interval 390 to 482 (PEESGDEDED…KGVKEEVKLA (93 aa)) is disordered. A phosphoserine mark is found at serine 393, serine 406, and serine 409. Basic and acidic residues predominate over residues 401–416 (PDKRISICSSDKRIAC). The span at 417–427 (EEEFSDSEEEG) shows a compositional bias: acidic residues. Phosphoserine; by CK2 occurs at positions 421 and 423. N6-methylated lysine; by EHMT2 is present on lysine 432. Lysine 438 is covalently cross-linked (Glycyl lysine isopeptide (Lys-Gly) (interchain with G-Cter in SUMO2)). Over residues 443–482 (VKTEDEKEKDPEEKKEVTEEEKTKEEKPEAKGVKEEVKLA) the composition is skewed to basic and acidic residues. Lysine 444 is covalently cross-linked (Glycyl lysine isopeptide (Lys-Gly) (interchain with G-Cter in SUMO2); alternate). Residue lysine 444 forms a Glycyl lysine isopeptide (Lys-Gly) (interchain with G-Cter in SUMO); alternate linkage. Glycyl lysine isopeptide (Lys-Gly) (interchain with G-Cter in SUMO2) cross-links involve residues lysine 456, lysine 457, and lysine 473. A Glycyl lysine isopeptide (Lys-Gly) (interchain with G-Cter in SUMO2); alternate cross-link involves residue lysine 476. Lysine 476 is covalently cross-linked (Glycyl lysine isopeptide (Lys-Gly) (interchain with G-Cter in SUMO); alternate). Lysine 480 is covalently cross-linked (Glycyl lysine isopeptide (Lys-Gly) (interchain with G-Cter in SUMO2)).

The protein belongs to the histone deacetylase family. HD type 1 subfamily. Part of the core histone deacetylase (HDAC) complex composed of HDAC1, HDAC2, RBBP4 and RBBP7, the core complex associates with SIN3, SAP18 and SAP30 to form the SIN3 HDAC complex. Component of the nucleosome remodeling and deacetylase (NuRD) repressor complex, composed of core proteins MTA1, MTA2, MTA3, RBBP4, RBBP7, HDAC1, HDAC2, MBD2, MBD3, and peripherally associated proteins CDK2AP1, CDK2AP2, GATAD2A, GATAD2B, CHD3, CHD4 and CHD5. The exact stoichiometry of the NuRD complex is unknown, and some subunits such as MBD2 and MBD3, GATAD2A and GATAD2B, and CHD3, CHD4 and CHD5 define mutually exclusive NuRD complexes. Component of a BHC histone deacetylase complex that contains HDAC1, HDAC2, HMG20B/BRAF35, KDM1A, RCOR1/CoREST and PHF21A/BHC80. The BHC complex may also contain ZMYM2, ZNF217, ZMYM3, GSE1 and GTF2I. Component of a mSin3A corepressor complex that contains SIN3A, SAP130, SUDS3/SAP45, ARID4B/SAP180, HDAC1 and HDAC2. Component of the SIN3B complex, which includes SIN3B, HDAC1, PHF12 and MORF4L1. Found in a trimeric complex with APBB1 and TSHZ3; the interaction between HDAC1 and APBB1 is mediated by TSHZ3. Forms a complex comprising APPL1, RUVBL2, APPL2, CTNNB1 and HDAC2. Component of a RCOR/GFI/KDM1A/HDAC complex. Part of a complex composed of TRIM28, HDAC1, HDAC2 and EHMT2. Part of a complex containing at least CDYL, MIER1, MIER2, HDAC1 and HDAC2. The large PER complex involved in the histone deacetylation is composed of at least HDAC1, PER2, SFPQ and SIN3A. Associates with the 9-1-1 complex; interacts with HUS1. Found in a complex with DNMT3A and HDAC7. Found in a complex with YY1, SIN3A and GON4L. Identified in a histone deacetylase complex that contains DNTTIP1, HDAC1 and MIDEAS; this complex assembles into a tetramer that contains four copies of each protein chain. Found in a complex composed of at least SINHCAF, SIN3A, HDAC1, SAP30, RBBP4, OGT and TET1. Interacts with GFI1; the interaction is direct. Interacts directly with GFI1B. Interacts with TSHZ3 (via N-terminus); the interaction is direct. Interacts with APEX1; the interaction is not dependent on the acetylated status of APEX1. Interacts with BANP. Interacts with BAZ2A/TIP5. Interacts with BCL6. Interacts with BCOR. Interacts with BHLHE40/DEC1. Interacts with BRCC3; this interaction is enhanced in the presence of PWWP2B. Interacts with BRMS1. Interacts with BRMS1L. Interacts with C10orf90/FATS (via its N-terminal); the interaction prevents binding of HDAC1 to CDKN1A/p21 and facilitates the acetylation and stabilization of CDKN1A/p21. Interacts with CBFA2T3. Interacts with CCAR2. Interacts with CDK2AP1. Interacts with CHD3. Interacts with CHD4. Interacts with CHFR. Interacts with CIART. Interacts with CDKN1A/p21. Interacts with CDK5 complexed to CDK5R1 (p25). Interacts with CRY1. Interacts with DAXX. Interacts with DDIT3/CHOP. Interacts with DDX5. Interacts with DHX36; this interaction occurs in a RNA-dependent manner. Interacts with DNMT1. Interacts with DNTTIP1. Interacts with E4F1. Interacts with EP300. Interacts with ERCC6. Interacts with GATAD2A. Interacts with HCFC1. Interacts with HDAC9. Interacts with HUS1. Interacts with INSM1. Interacts with KDM4A. Interacts with KDM5A; this interaction impairs histone deacetylation. Interacts with KDM5B. Interacts with KLF1. Interacts with MBD3L2. Interacts with MIER1. Interacts with NFE4. Interacts with NR4A2/NURR1. Interacts with NR1D2 (via C-terminus). Interacts with NRIP1. Interacts with NSD2. Interacts with PACS2. Interacts with PHB2. Interacts with PPHLN1. Interacts with PRDM6. Interacts with PRDM16. Interacts with PWWP2A in a MTA1-dependent manner. Interacts with PWWP2B. Interacts with RB1. Interacts with RERE. Interacts with SANBR (via the BTB domain). Interacts with SAMSN1. Interacts with SAP30L. Interacts with SETDB1. Interacts with SIN3A. Interacts with SMAD3. Interacts with SMAD4; positively regulated by ZBTB7A. Interacts with SMARCAD1. Interacts with SMARCA4/BRG1. Interacts with SMYD2. Interacts with SMYD4 (via MYND-type zinc finger). Interacts with SP1; the interaction deacetylates SP1 and regulates its transcriptional activity. Interacts with SP3; the interaction deacetylates SP3 and regulates its transcriptional activity. In vitro, C(18) ceramides increase this interaction and the subsequent SP3 deacetylation and SP3-mediated repression of the TERT promoter. Interacts with SPEN/MINT. Interacts with SPHK2. Interacts with SUV39H1. Interacts with TGIF. Interacts with TGIF2. Interacts with TRAF6. Interacts with TRIM28; the interaction recruits HDAC1 to E2F1 and inhibits its acetylation. Interacts with TSC22D3 isoform 1; this interaction affects HDAC1 activity on MYOG promoter and thus inhibits MYOD1 transcriptional activity. Interacts with UHRF1. Interacts with UHRF2. Interacts with ZBTB7A. Interacts with ZMYND8. Interacts with ZMYND15. Interacts with ZNF431. Interacts with ZNF516; this interaction is enhanced in the presence of PWWP2B. Interacts with ZNF541. Interacts with ZNF638. Interacts with ZNHIT1. Interacts with the non-histone region of MACROH2A1. Identified in a complex with HDAC2, KCTD19, DNTTIP1 and ZNF541. Interacts with VRK1. In terms of assembly, (Microbial infection) Interacts with SV40 large T antigen. Requires Zn(2+) as cofactor. In terms of processing, sumoylated on Lys-444 and Lys-476; which promotes enzymatic activity. Desumoylated by SENP1. Post-translationally, phosphorylation on Ser-421 and Ser-423 promotes enzymatic activity and interactions with NuRD and SIN3 complexes. Phosphorylated by CDK5. Ubiquitinated by CHFR, leading to its degradation by the proteasome. Ubiquitinated by KCTD11, leading to proteasomal degradation. As to expression, ubiquitous, with higher levels in heart, pancreas and testis, and lower levels in kidney and brain.

It localises to the nucleus. It catalyses the reaction N(6)-acetyl-L-lysyl-[histone] + H2O = L-lysyl-[histone] + acetate. The enzyme catalyses N(6)-acetyl-L-lysyl-[protein] + H2O = L-lysyl-[protein] + acetate. It carries out the reaction N(6)-(2E)-butenoyl-L-lysyl-[protein] + H2O = (2E)-2-butenoate + L-lysyl-[protein]. The catalysed reaction is N(6)-[(S)-lactoyl]-L-lysyl-[protein] + H2O = (S)-lactate + L-lysyl-[protein]. With respect to regulation, inositol tetraphosphate (1D-myo-inositol 1,4,5,6-tetrakisphosphate) may act as an intermolecular glue between HDAC1 and N-Cor repressor complex components. Functionally, histone deacetylase that catalyzes the deacetylation of lysine residues on the N-terminal part of the core histones (H2A, H2B, H3 and H4). Histone deacetylation gives a tag for epigenetic repression and plays an important role in transcriptional regulation, cell cycle progression and developmental events. Histone deacetylases act via the formation of large multiprotein complexes. Acts as a component of the histone deacetylase NuRD complex which participates in the remodeling of chromatin. As part of the SIN3B complex is recruited downstream of the constitutively active genes transcriptional start sites through interaction with histones and mitigates histone acetylation and RNA polymerase II progression within transcribed regions contributing to the regulation of transcription. Also functions as a deacetylase for non-histone targets, such as NR1D2, RELA, SP1, SP3, STAT3 and TSHZ3. Deacetylates SP proteins, SP1 and SP3, and regulates their function. Component of the BRG1-RB1-HDAC1 complex, which negatively regulates the CREST-mediated transcription in resting neurons. Upon calcium stimulation, HDAC1 is released from the complex and CREBBP is recruited, which facilitates transcriptional activation. Deacetylates TSHZ3 and regulates its transcriptional repressor activity. Deacetylates 'Lys-310' in RELA and thereby inhibits the transcriptional activity of NF-kappa-B. Deacetylates NR1D2 and abrogates the effect of KAT5-mediated relieving of NR1D2 transcription repression activity. Component of a RCOR/GFI/KDM1A/HDAC complex that suppresses, via histone deacetylase (HDAC) recruitment, a number of genes implicated in multilineage blood cell development. Involved in CIART-mediated transcriptional repression of the circadian transcriptional activator: CLOCK-BMAL1 heterodimer. Required for the transcriptional repression of circadian target genes, such as PER1, mediated by the large PER complex or CRY1 through histone deacetylation. In addition to protein deacetylase activity, also has protein-lysine deacylase activity: acts as a protein decrotonylase and delactylase by mediating decrotonylation ((2E)-butenoyl) and delactylation (lactoyl) of histones, respectively. This Homo sapiens (Human) protein is Histone deacetylase 1.